We begin with the raw amino-acid sequence, 149 residues long: D-aminoacyl-tRNA deacylase (149 aa).

Positions 137-138 match the Gly-cisPro motif, important for rejection of L-amino acids motif; that stretch reads GP.

It belongs to the DTD family. Homodimer.

The protein resides in the cytoplasm. The catalysed reaction is glycyl-tRNA(Ala) + H2O = tRNA(Ala) + glycine + H(+). It catalyses the reaction a D-aminoacyl-tRNA + H2O = a tRNA + a D-alpha-amino acid + H(+). In terms of biological role, an aminoacyl-tRNA editing enzyme that deacylates mischarged D-aminoacyl-tRNAs. Also deacylates mischarged glycyl-tRNA(Ala), protecting cells against glycine mischarging by AlaRS. Acts via tRNA-based rather than protein-based catalysis; rejects L-amino acids rather than detecting D-amino acids in the active site. By recycling D-aminoacyl-tRNA to D-amino acids and free tRNA molecules, this enzyme counteracts the toxicity associated with the formation of D-aminoacyl-tRNA entities in vivo and helps enforce protein L-homochirality. The chain is D-aminoacyl-tRNA deacylase from Desulfotalea psychrophila (strain LSv54 / DSM 12343).